A 419-amino-acid chain; its full sequence is L-rhamnose isomerase (419 aa).

Positions 262, 294, and 296 each coordinate Mn(2+).

The protein belongs to the rhamnose isomerase family. Homotetramer. Mn(2+) is required as a cofactor.

The protein resides in the cytoplasm. The catalysed reaction is L-rhamnopyranose = L-rhamnulose. The protein operates within carbohydrate degradation; L-rhamnose degradation; glycerone phosphate from L-rhamnose: step 1/3. Catalyzes the interconversion of L-rhamnose and L-rhamnulose. The protein is L-rhamnose isomerase of Salmonella paratyphi A (strain AKU_12601).